A 1027-amino-acid chain; its full sequence is Cysteine-rich motor neuron 1 protein (1027 aa).

Positions 1 to 28 (MASSRMYLLVKCMLILQLMVLIAKNSRA) are cleaved as a signal peptide. Residues 29–106 (LICLPCDKSK…QYEVGNCEDE (78 aa)) enclose the IGFBP N-terminal domain. Residues 29 to 931 (LICLPCDKSK…PLPSEDAGLH (903 aa)) are Extracellular-facing. Disulfide bonds link Cys-31–Cys-54, Cys-34–Cys-56, Cys-39–Cys-57, and Cys-45–Cys-60. The N-linked (GlcNAc...) asparagine glycan is linked to Asn-65. 2 cysteine pairs are disulfide-bonded: Cys-68-Cys-84 and Cys-78-Cys-103. The short motif at 308-310 (RGD) is the Cell attachment site element. N-linked (GlcNAc...) asparagine glycosylation occurs at Asn-324. VWFC domains follow at residues 328 to 385 (PACT…PVCE) and 395 to 451 (AGCY…PVCE). 4 Antistasin-like domains span residues 463–492 (CGSLDNCTLLEQSCAFGFRLDPSGCRTCAC), 499–526 (CGGLMASCTLKCPFGFQTDIHGCDVCQC), 533–558 (CKAVACAKDCPFGYIKNKHGCDTCRC), and 561–586 (CPELPCDKACPMGFQHDELGCLICQC). Residue Asn-468 is glycosylated (N-linked (GlcNAc...) asparagine). 2 VWFC domains span residues 601–658 (GSCL…PTCP) and 672–730 (SVCL…PHCP). Asn-741 carries N-linked (GlcNAc...) asparagine glycosylation. 2 VWFC domains span residues 746–804 (SYCR…PYCL) and 810–867 (AVCH…PMCP). A disordered region spans residues 877 to 897 (IEKTDQRGDKSRHQPAWPTHS). Basic and acidic residues predominate over residues 878–888 (EKTDQRGDKSR). Residues 883–885 (RGD) carry the Cell attachment site motif. A helical transmembrane segment spans residues 932–952 (WAWVALPVLMMMLTLAALLLV). Residues 953 to 1027 (NQRKQWIPVP…LQADNFYQTA (75 aa)) lie on the Cytoplasmic side of the membrane.

Its subcellular location is the membrane. Its function is as follows. May play a role in CNS development by interacting with growth factors implicated in motor neuron differentiation and survival. The protein is Cysteine-rich motor neuron 1 protein (crim1) of Danio rerio (Zebrafish).